The chain runs to 430 residues: Asparagine--tRNA ligase (430 aa).

This sequence belongs to the class-II aminoacyl-tRNA synthetase family.

The protein resides in the cytoplasm. The catalysed reaction is tRNA(Asn) + L-asparagine + ATP = L-asparaginyl-tRNA(Asn) + AMP + diphosphate + H(+). The polypeptide is Asparagine--tRNA ligase (Thermococcus gammatolerans (strain DSM 15229 / JCM 11827 / EJ3)).